A 110-amino-acid chain; its full sequence is Parvalbumin alpha (110 aa).

Position 2 is an N-acetylserine (Ser2). Ser2, Ser8, and Ser24 each carry phosphoserine. EF-hand domains are found at residues 39–74 and 78–110; these read KSADDVKKVFHILDKDKSGFIEEDELGSILKGFSSD and LSAKETKTLMAAGDKDGDGKIGVEEFSTLVAES. Asp52, Asp54, Ser56, Phe58, Glu60, and Glu63 together coordinate Ca(2+). Ser66 carries the post-translational modification Phosphoserine. Asp91, Asp93, Asp95, Lys97, and Glu102 together coordinate Ca(2+).

Functionally, in muscle, parvalbumin is thought to be involved in relaxation after contraction. It binds two calcium ions. This is Parvalbumin alpha (Pvalb) from Rattus norvegicus (Rat).